Consider the following 397-residue polypeptide: Phosphoglycerate kinase (397 aa).

Substrate contacts are provided by residues 21–23 (DMN), Arg-36, 59–62 (HLGR), Arg-114, and Arg-147. ATP is bound by residues Lys-198, Glu-320, and 346–349 (GGDT).

Belongs to the phosphoglycerate kinase family. Monomer.

The protein resides in the cytoplasm. The enzyme catalyses (2R)-3-phosphoglycerate + ATP = (2R)-3-phospho-glyceroyl phosphate + ADP. The protein operates within carbohydrate degradation; glycolysis; pyruvate from D-glyceraldehyde 3-phosphate: step 2/5. The chain is Phosphoglycerate kinase from Neisseria gonorrhoeae (strain NCCP11945).